A 365-amino-acid chain; its full sequence is Probable dual-specificity RNA methyltransferase RlmN (365 aa).

Residue Glu-111 is the Proton acceptor of the active site. A Radical SAM core domain is found at 117-351 (ADDRMTACIS…VNIRRSRGKD (235 aa)). Cys-124 and Cys-356 form a disulfide bridge. The [4Fe-4S] cluster site is built by Cys-131, Cys-135, and Cys-138. S-adenosyl-L-methionine contacts are provided by residues 182-183 (GE), Ser-214, 237-239 (SLH), and Asn-313. Catalysis depends on Cys-356, which acts as the S-methylcysteine intermediate.

It belongs to the radical SAM superfamily. RlmN family. The cofactor is [4Fe-4S] cluster.

It is found in the cytoplasm. The catalysed reaction is adenosine(2503) in 23S rRNA + 2 reduced [2Fe-2S]-[ferredoxin] + 2 S-adenosyl-L-methionine = 2-methyladenosine(2503) in 23S rRNA + 5'-deoxyadenosine + L-methionine + 2 oxidized [2Fe-2S]-[ferredoxin] + S-adenosyl-L-homocysteine. It carries out the reaction adenosine(37) in tRNA + 2 reduced [2Fe-2S]-[ferredoxin] + 2 S-adenosyl-L-methionine = 2-methyladenosine(37) in tRNA + 5'-deoxyadenosine + L-methionine + 2 oxidized [2Fe-2S]-[ferredoxin] + S-adenosyl-L-homocysteine. Its function is as follows. Specifically methylates position 2 of adenine 2503 in 23S rRNA and position 2 of adenine 37 in tRNAs. The sequence is that of Probable dual-specificity RNA methyltransferase RlmN from Cytophaga hutchinsonii (strain ATCC 33406 / DSM 1761 / CIP 103989 / NBRC 15051 / NCIMB 9469 / D465).